The sequence spans 361 residues: S-adenosylmethionine:tRNA ribosyltransferase-isomerase (361 aa).

This sequence belongs to the QueA family. Monomer.

It localises to the cytoplasm. The enzyme catalyses 7-aminomethyl-7-carbaguanosine(34) in tRNA + S-adenosyl-L-methionine = epoxyqueuosine(34) in tRNA + adenine + L-methionine + 2 H(+). It functions in the pathway tRNA modification; tRNA-queuosine biosynthesis. In terms of biological role, transfers and isomerizes the ribose moiety from AdoMet to the 7-aminomethyl group of 7-deazaguanine (preQ1-tRNA) to give epoxyqueuosine (oQ-tRNA). The sequence is that of S-adenosylmethionine:tRNA ribosyltransferase-isomerase from Actinobacillus pleuropneumoniae serotype 7 (strain AP76).